Consider the following 364-residue polypeptide: UDP-3-O-acylglucosamine N-acyltransferase (364 aa).

The Proton acceptor role is filled by His-258.

It belongs to the transferase hexapeptide repeat family. LpxD subfamily. In terms of assembly, homotrimer.

The catalysed reaction is a UDP-3-O-[(3R)-3-hydroxyacyl]-alpha-D-glucosamine + a (3R)-hydroxyacyl-[ACP] = a UDP-2-N,3-O-bis[(3R)-3-hydroxyacyl]-alpha-D-glucosamine + holo-[ACP] + H(+). It functions in the pathway bacterial outer membrane biogenesis; LPS lipid A biosynthesis. In terms of biological role, catalyzes the N-acylation of UDP-3-O-acylglucosamine using 3-hydroxyacyl-ACP as the acyl donor. Is involved in the biosynthesis of lipid A, a phosphorylated glycolipid that anchors the lipopolysaccharide to the outer membrane of the cell. This is UDP-3-O-acylglucosamine N-acyltransferase from Burkholderia orbicola (strain AU 1054).